The chain runs to 958 residues: MVLMMDIKIMSAFSILFLSLMVSNEFLEFLANTVYAAILFIIILFFYQNRQHFFTTSSSSKDSLTSTTTTTTTTSITSSLIQQQQEKEQQQQLEQQQQQQSIKLITKEITIENDSEKNTSTTTSIITKEQSPGSVRLIQNYSASQQSELTNTTIKQLQQKNQELQEQINNQIEKSRKDQLKYFNSNNKSQSEIKEQIEKIIKLTEKNDDLLNSIVILNSTIDGNRIKMQEITKDRDSIYSSEQKLLSRLTAFEKKEKEYQDNEKQLQKKLSDQKDQYSTLKKEFDEKVKKSNKLENSIQSLESQIQKLLQKQEKEKQKLEKDKERERSSSFSSDISSSSTTSTTASTFLSSSPSKSIPIPIPIKTSNAISDLKRNNSNDSVNGLIGNGNSSVSPPSSSYLRESSDDSDNQSSSSPSEPKFKSLFNKVKSESSKIVNKAQKGINKHLGSDFFTPANTTTSTTTTTSTTSTSTTTPITSASATAAAISSSSIITSPTTNTTNDILSSSSSSSSSSSSLLTTNAILSPPVGNEQQMEVINDKTEVNQSPVKPLIFFDDLGNDKLLDSTTEEQIQSKMTISPRDKDRILIDKEQSLSDLFINSKENISNISVSNLDNFLKTNNNNNKNNIEESNNNNNNNNNNNNNNNNNNNNNNNNNKNDNKEVNSKLEFSIKDEENKIGLRRAKKKLSPGCSTMMEDVSIAIYPFLKEKKLSNCSNIGLFGVFDGHAGRGAADSASKLFPKEIEKLLESGNYSLTEQDDGGDNNHNQSKLLNDLFSNVDNKMKDHEYEGCTATLALIWSDGEEQQQQQQRYLQVGNVGDSSAFLCRGNESIELTFDHKANDPSEKQRIKDQGIPVSDNQTRINGVAVSRSLGNHFIKEQNIGMISTPHISNRYLLTPQDKFVIIASDGLWDVINGKDAIEKVSSLYDQGATADSMASCLLETAIQSSLCKDNVTVIIVKL.

Transmembrane regions (helical) follow at residues 2-22 (VLMMDIKIMSAFSILFLSLMV) and 26-46 (FLEFLANTVYAAILFIIILFF). Positions 142–330 (SASQQSELTN…KDKERERSSS (189 aa)) form a coiled coil. Over residues 312–328 (QEKEKQKLEKDKERERS) the composition is skewed to basic and acidic residues. Disordered stretches follow at residues 312–361 (QEKE…PIPI), 380–421 (SVNG…PKFK), 445–475 (HLGSDFFTPANTTTSTTTTTSTTSTSTTTPI), 491–525 (ITSPTTNTTNDILSSSSSSSSSSSSLLTTNAILSP), and 619–659 (NNNN…NDNK). Low complexity-rich tracts occupy residues 329–361 (SSFSSDISSSSTTSTTASTFLSSSPSKSIPIPI), 390–401 (SSVSPPSSSYLR), 452–475 (TPANTTTSTTTTTSTTSTSTTTPI), 491–515 (ITSPTTNTTNDILSSSSSSSSSSSS), and 619–655 (NNNNKNNIEESNNNNNNNNNNNNNNNNNNNNNNNNNK). Positions 613–666 (NFLKTNNNNNKNNIEESNNNNNNNNNNNNNNNNNNNNNNNNNKNDNKEVNSKLE) form a coiled coil. The 284-residue stretch at 675–958 (KIGLRRAKKK…DNVTVIIVKL (284 aa)) folds into the PPM-type phosphatase domain. Residues aspartate 722, glycine 723, aspartate 905, and aspartate 949 each coordinate Mn(2+).

The protein in the C-terminal section; belongs to the PP2C family. Requires Mg(2+) as cofactor. Mn(2+) serves as cofactor.

The protein resides in the membrane. The enzyme catalyses O-phospho-L-seryl-[protein] + H2O = L-seryl-[protein] + phosphate. The catalysed reaction is O-phospho-L-threonyl-[protein] + H2O = L-threonyl-[protein] + phosphate. The polypeptide is Probable protein phosphatase DDB_G0282105 (Dictyostelium discoideum (Social amoeba)).